The following is a 185-amino-acid chain: Elongation factor P (185 aa).

It belongs to the elongation factor P family.

Its subcellular location is the cytoplasm. It functions in the pathway protein biosynthesis; polypeptide chain elongation. Involved in peptide bond synthesis. Stimulates efficient translation and peptide-bond synthesis on native or reconstituted 70S ribosomes in vitro. Probably functions indirectly by altering the affinity of the ribosome for aminoacyl-tRNA, thus increasing their reactivity as acceptors for peptidyl transferase. In Caldanaerobacter subterraneus subsp. tengcongensis (strain DSM 15242 / JCM 11007 / NBRC 100824 / MB4) (Thermoanaerobacter tengcongensis), this protein is Elongation factor P.